Consider the following 205-residue polypeptide: Small ribosomal subunit protein uS4 (205 aa).

The disordered stretch occupies residues 1–44 (MSKRHSQKYKIDRRMGENLWGRPKSPVNSRSYGPGQHGQRRKTK). The S4 RNA-binding domain occupies 94 to 173 (SRLDAIVYRC…LPEYIDLDAK (80 aa)).

It belongs to the universal ribosomal protein uS4 family. In terms of assembly, part of the 30S ribosomal subunit. Contacts protein S5. The interaction surface between S4 and S5 is involved in control of translational fidelity.

In terms of biological role, one of the primary rRNA binding proteins, it binds directly to 16S rRNA where it nucleates assembly of the body of the 30S subunit. With S5 and S12 plays an important role in translational accuracy. This is Small ribosomal subunit protein uS4 from Maricaulis maris (strain MCS10) (Caulobacter maris).